Here is a 50-residue protein sequence, read N- to C-terminus: Protein HokE (50 aa).

Residues 5–25 (YALVAVIVLCLTVLGFTLLVG) traverse the membrane as a helical segment.

The protein belongs to the Hok/Gef family.

It localises to the cell inner membrane. In terms of biological role, toxic component of a type I toxin-antitoxin (TA) system. When overexpressed kills cells within minutes; causes collapse of the transmembrane potential and arrest of respiration. Its toxic effect is probably neutralized by an antisense antitoxin Sok RNA. In Escherichia coli O157:H7, this protein is Protein HokE (hokE).